We begin with the raw amino-acid sequence, 321 residues long: MSGARLHTLLPELTTRQSVMVVGAAVIDVIADAYALPWRGCDIELKQQSVNVGGCALNIAVALKRLGIEAGNALPLGQGVWAEMIRNRMAKEGLISLIDNAEGDNGWCLALVEPDGERTFMSFSGVENQWNRQWLARLTVAPGSLLYFSGYQLASPCGELLVEWLEELQDVTPFIDFGPRIGDIPDALLARIMACRPLVSLNRQEAEIAAERFALSAEITTLGKQWQEKFAAPLIVRLDKEGAWYFSNDASGCIPAFPTQVVDTIGAGDSHAGGVLAGLASGLPLADAVLLGNAVASWVVGHRGGDCAPTREELLLAHKNV.

It belongs to the carbohydrate kinase PfkB family.

This is an uncharacterized protein from Escherichia coli (strain K12).